The primary structure comprises 324 residues: Beta-ketoacyl-[acyl-carrier-protein] synthase III (324 aa).

Catalysis depends on residues C114 and H246. The segment at 247–251 (QANLR) is ACP-binding. The active site involves N276.

It belongs to the thiolase-like superfamily. FabH family. As to quaternary structure, homodimer.

It is found in the cytoplasm. It carries out the reaction malonyl-[ACP] + acetyl-CoA + H(+) = 3-oxobutanoyl-[ACP] + CO2 + CoA. It functions in the pathway lipid metabolism; fatty acid biosynthesis. Catalyzes the condensation reaction of fatty acid synthesis by the addition to an acyl acceptor of two carbons from malonyl-ACP. Catalyzes the first condensation reaction which initiates fatty acid synthesis and may therefore play a role in governing the total rate of fatty acid production. Possesses both acetoacetyl-ACP synthase and acetyl transacylase activities. Its substrate specificity determines the biosynthesis of branched-chain and/or straight-chain of fatty acids. The protein is Beta-ketoacyl-[acyl-carrier-protein] synthase III of Campylobacter jejuni subsp. jejuni serotype O:6 (strain 81116 / NCTC 11828).